We begin with the raw amino-acid sequence, 483 residues long: Probable zinc metalloprotease PTT_08196 (483 aa).

The signal sequence occupies residues 1-18 (MLFRSVILSNALLLPACA). N-linked (GlcNAc...) asparagine glycosylation is found at asparagine 96 and asparagine 121. Zn(2+) is bound by residues histidine 167, aspartate 187, and glutamate 220. Asparagine 235 is a glycosylation site (N-linked (GlcNAc...) asparagine). Aspartate 247 is a Zn(2+) binding site. Asparagine 310, asparagine 362, asparagine 401, asparagine 411, and asparagine 421 each carry an N-linked (GlcNAc...) asparagine glycan. Positions 396 to 483 (PAMPRNVTID…KSPAVYPFPA (88 aa)) constitute a Fibronectin type-III domain.

Belongs to the peptidase M28 family. M28B subfamily. Requires Zn(2+) as cofactor.

The protein localises to the secreted. This is Probable zinc metalloprotease PTT_08196 from Pyrenophora teres f. teres (strain 0-1) (Barley net blotch fungus).